The sequence spans 545 residues: Membrane protein insertase YidC (545 aa).

Helical transmembrane passes span 350-370 (IIGNWGWAIIVLTIIVKAVLY), 424-444 (LPMLLQIPVFIGLYWALFASV), 461-481 (ADPYYILPIIMAATMFAQTYL), and 498-518 (PLVFSVMFFFFPAGLVLYWVI).

It belongs to the OXA1/ALB3/YidC family. Type 1 subfamily. As to quaternary structure, interacts with the Sec translocase complex via SecD. Specifically interacts with transmembrane segments of nascent integral membrane proteins during membrane integration.

The protein localises to the cell inner membrane. In terms of biological role, required for the insertion and/or proper folding and/or complex formation of integral membrane proteins into the membrane. Involved in integration of membrane proteins that insert both dependently and independently of the Sec translocase complex, as well as at least some lipoproteins. Aids folding of multispanning membrane proteins. This is Membrane protein insertase YidC from Neisseria meningitidis serogroup A / serotype 4A (strain DSM 15465 / Z2491).